The sequence spans 356 residues: UDP-N-acetylglucosamine--N-acetylmuramyl-(pentapeptide) pyrophosphoryl-undecaprenol N-acetylglucosamine transferase (356 aa).

Residues Thr-14–Gly-16, Asn-126, Arg-162, Ser-190, Ile-244, and Gln-289 each bind UDP-N-acetyl-alpha-D-glucosamine.

Belongs to the glycosyltransferase 28 family. MurG subfamily.

Its subcellular location is the cell inner membrane. The enzyme catalyses di-trans,octa-cis-undecaprenyl diphospho-N-acetyl-alpha-D-muramoyl-L-alanyl-D-glutamyl-meso-2,6-diaminopimeloyl-D-alanyl-D-alanine + UDP-N-acetyl-alpha-D-glucosamine = di-trans,octa-cis-undecaprenyl diphospho-[N-acetyl-alpha-D-glucosaminyl-(1-&gt;4)]-N-acetyl-alpha-D-muramoyl-L-alanyl-D-glutamyl-meso-2,6-diaminopimeloyl-D-alanyl-D-alanine + UDP + H(+). Its pathway is cell wall biogenesis; peptidoglycan biosynthesis. Its function is as follows. Cell wall formation. Catalyzes the transfer of a GlcNAc subunit on undecaprenyl-pyrophosphoryl-MurNAc-pentapeptide (lipid intermediate I) to form undecaprenyl-pyrophosphoryl-MurNAc-(pentapeptide)GlcNAc (lipid intermediate II). The protein is UDP-N-acetylglucosamine--N-acetylmuramyl-(pentapeptide) pyrophosphoryl-undecaprenol N-acetylglucosamine transferase of Cupriavidus necator (strain ATCC 17699 / DSM 428 / KCTC 22496 / NCIMB 10442 / H16 / Stanier 337) (Ralstonia eutropha).